The sequence spans 117 residues: Small ribosomal subunit protein uS12c (117 aa).

Residues 9–40 are disordered; that stretch reads RNARQPIENRKKSPALRGCPQRRGTITPKKPN.

It belongs to the universal ribosomal protein uS12 family. Part of the 30S ribosomal subunit.

The protein localises to the plastid. The protein resides in the chloroplast. In terms of biological role, with S4 and S5 plays an important role in translational accuracy. Located at the interface of the 30S and 50S subunits. In Pinus koraiensis (Korean pine), this protein is Small ribosomal subunit protein uS12c (rps12).